Reading from the N-terminus, the 164-residue chain is MEMTTTQRLILANQYKLMGLLDPANAKTYARSEAIVRGGFSLELKALDNEFNNLSVEECQTVLDTLEMYKALQVSYNNLTDKAEVTEHRLKFAGYCAVREKKYLNYLRFITGTEGKYQEFMHCEHGCDSQTPMWDKYTKMLDVWRNCPHGYHLSIQEIQKILNA.

Belongs to the UPF0304 family.

The protein is UPF0304 protein Asuc_0543 of Actinobacillus succinogenes (strain ATCC 55618 / DSM 22257 / CCUG 43843 / 130Z).